We begin with the raw amino-acid sequence, 131 residues long: Small ribosomal subunit protein uS11 (131 aa).

This sequence belongs to the universal ribosomal protein uS11 family. Part of the 30S ribosomal subunit. Interacts with proteins S7 and S18. Binds to IF-3.

Functionally, located on the platform of the 30S subunit, it bridges several disparate RNA helices of the 16S rRNA. Forms part of the Shine-Dalgarno cleft in the 70S ribosome. The protein is Small ribosomal subunit protein uS11 of Bacillus licheniformis (strain ATCC 14580 / DSM 13 / JCM 2505 / CCUG 7422 / NBRC 12200 / NCIMB 9375 / NCTC 10341 / NRRL NRS-1264 / Gibson 46).